The sequence spans 325 residues: Natural cytotoxicity triggering receptor 1 (325 aa).

The first 16 residues, 1 to 16 (MLPTLTALLCLGLCLS), serve as a signal peptide directing secretion. Residues 17 to 255 (QRINTEKETL…SAFWDHTTQN (239 aa)) are Extracellular-facing. 2 consecutive Ig-like domains span residues 34–118 (KPSI…LVVT) and 129–211 (YPRP…LLIT). An intrachain disulfide couples cysteine 49 to cysteine 98. Asparagine 139 carries N-linked (GlcNAc...) asparagine glycosylation. A disulfide bond links cysteine 144 and cysteine 190. Asparagine 216 and asparagine 238 each carry an N-linked (GlcNAc...) asparagine glycan. A helical transmembrane segment spans residues 256–273 (LIRIGLACIILITLVWLL). Residues 274–325 (TEDWLSKRKDHEEANRLTNWECRRRWRMQHYFEEEQRNAISMMELKATPGAL) are Cytoplasmic-facing.

Belongs to the natural cytotoxicity receptor (NCR) family. As to quaternary structure, interacts with CD3Z and FCER1G. As to expression, selectively expressed by NK cells.

The protein resides in the cell membrane. Its function is as follows. Cytotoxicity-activating receptor that may contribute to the increased efficiency of activated natural killer (NK) cells to mediate tumor cell lysis. This Mus musculus (Mouse) protein is Natural cytotoxicity triggering receptor 1 (Ncr1).